The chain runs to 382 residues: Succinate--CoA ligase [ADP-forming] subunit beta (382 aa).

Residues 9–240 form the ATP-grasp domain; sequence KELFSKYGVK…PRDVTEFEAY (232 aa). ATP contacts are provided by residues K45, 52 to 54, V94, and E99; that span reads GRG. Residues N193 and D207 each contribute to the Mg(2+) site. Residues N260 and 317 to 319 each bind substrate; that span reads GIT.

This sequence belongs to the succinate/malate CoA ligase beta subunit family. Heterotetramer of two alpha and two beta subunits. It depends on Mg(2+) as a cofactor.

The enzyme catalyses succinate + ATP + CoA = succinyl-CoA + ADP + phosphate. The catalysed reaction is GTP + succinate + CoA = succinyl-CoA + GDP + phosphate. The protein operates within carbohydrate metabolism; tricarboxylic acid cycle; succinate from succinyl-CoA (ligase route): step 1/1. Functionally, succinyl-CoA synthetase functions in the citric acid cycle (TCA), coupling the hydrolysis of succinyl-CoA to the synthesis of either ATP or GTP and thus represents the only step of substrate-level phosphorylation in the TCA. The beta subunit provides nucleotide specificity of the enzyme and binds the substrate succinate, while the binding sites for coenzyme A and phosphate are found in the alpha subunit. The protein is Succinate--CoA ligase [ADP-forming] subunit beta of Pyrobaculum aerophilum (strain ATCC 51768 / DSM 7523 / JCM 9630 / CIP 104966 / NBRC 100827 / IM2).